Consider the following 154-residue polypeptide: Large ribosomal subunit protein uL13 (154 aa).

Belongs to the universal ribosomal protein uL13 family. Part of the 50S ribosomal subunit.

Functionally, this protein is one of the early assembly proteins of the 50S ribosomal subunit, although it is not seen to bind rRNA by itself. It is important during the early stages of 50S assembly. The sequence is that of Large ribosomal subunit protein uL13 from Rhodospirillum rubrum (strain ATCC 11170 / ATH 1.1.1 / DSM 467 / LMG 4362 / NCIMB 8255 / S1).